The following is a 453-amino-acid chain: Ezy-1 protein (453 aa).

Residues 1–28 (MQLSNSLRSARSAAASSGCALASRPVVA) form the signal peptide. Disordered stretches follow at residues 167-187 (SDGG…DADG), 272-307 (TGKA…SSGG), and 412-453 (SAGD…SPNM). A compositionally biased stretch (acidic residues) spans 279–300 (AEGDDGEGEEEGEAQDVGEDAV). Positions 415–425 (DGHEPEPKRPE) are enriched in basic and acidic residues.

The protein is Ezy-1 protein (Ezy-1) of Chlamydomonas reinhardtii (Chlamydomonas smithii).